A 165-amino-acid chain; its full sequence is Ecotin-like protein 4 (165 aa).

The protein belongs to the protease inhibitor I11 (ecotin) family.

The polypeptide is Ecotin-like protein 4 (Trypanosoma brucei brucei (strain 927/4 GUTat10.1)).